The following is a 399-amino-acid chain: Trimethyllysine dioxygenase (399 aa).

Fe cation contacts are provided by H214, D216, and H360.

Belongs to the gamma-BBH/TMLD family. Fe(2+) serves as cofactor. It depends on L-ascorbate as a cofactor.

Its subcellular location is the cytoplasm. It carries out the reaction N(6),N(6),N(6)-trimethyl-L-lysine + 2-oxoglutarate + O2 = (3S)-3-hydroxy-N(6),N(6),N(6)-trimethyl-L-lysine + succinate + CO2. The protein operates within amine and polyamine biosynthesis; carnitine biosynthesis. In terms of biological role, converts trimethyllysine (TML) into hydroxytrimethyllysine (HTML). This chain is Trimethyllysine dioxygenase, found in Meyerozyma guilliermondii (strain ATCC 6260 / CBS 566 / DSM 6381 / JCM 1539 / NBRC 10279 / NRRL Y-324) (Yeast).